The primary structure comprises 529 residues: Putative UPF0481 protein At3g02645 (529 aa).

Residues asparagine 365 and asparagine 403 are each glycosylated (N-linked (GlcNAc...) asparagine). A helical transmembrane segment spans residues 498–518 (ILAFLAAVLLLMLVSLQLFSL).

Belongs to the UPF0481 family.

It is found in the membrane. The chain is Putative UPF0481 protein At3g02645 from Arabidopsis thaliana (Mouse-ear cress).